A 363-amino-acid polypeptide reads, in one-letter code: Alanine racemase (363 aa).

The active-site Proton acceptor; specific for D-alanine is K35. K35 carries the N6-(pyridoxal phosphate)lysine modification. Substrate is bound at residue R134. Residue Y259 is the Proton acceptor; specific for L-alanine of the active site. M307 is a substrate binding site.

Belongs to the alanine racemase family. The cofactor is pyridoxal 5'-phosphate.

It catalyses the reaction L-alanine = D-alanine. The protein operates within amino-acid biosynthesis; D-alanine biosynthesis; D-alanine from L-alanine: step 1/1. In terms of biological role, catalyzes the interconversion of L-alanine and D-alanine. May also act on other amino acids. The chain is Alanine racemase (alr) from Shewanella denitrificans (strain OS217 / ATCC BAA-1090 / DSM 15013).